The following is a 118-amino-acid chain: UPF0102 protein Sde_3146 (118 aa).

It belongs to the UPF0102 family.

In Saccharophagus degradans (strain 2-40 / ATCC 43961 / DSM 17024), this protein is UPF0102 protein Sde_3146.